The following is a 468-amino-acid chain: Peroxisome proliferator-activated receptor alpha (468 aa).

The segment at residues 99–173 (NIECRICGDK…VGMSHNAIRF (75 aa)) is a DNA-binding region (nuclear receptor). NR C4-type zinc fingers lie at residues 102–122 (CRIC…CEGC) and 139–161 (CDRS…FHKC). An NR LBD domain is found at 239–466 (FVIHDMETLC…HPLLQEIYRD (228 aa)). The tract at residues 304–433 (DQVTLLKYGV…PKLLQKMVDL (130 aa)) is required for heterodimerization with RXRA.

Belongs to the nuclear hormone receptor family. NR1 subfamily. Heterodimer; with RXRA. This heterodimerization is required for DNA binding and transactivation activity. Interacts with NCOA3 coactivator. Interacts with CITED2; the interaction stimulates its transcriptional activity. Also interacts with PPARBP in vitro. Interacts with AKAP13, LPIN1, PRDM16 and coactivator NCOA6. Interacts with ASXL1 and ASXL2. Interacts with PER2. Interacts with SIRT1; the interaction seems to be modulated by NAD(+) levels. Interacts with CRY1 and CRY2. In hepatocytes, interacts with PAQR3 and HUWE1; the interactions promote PPARA poylubiquitination and HUWE1-mediated degradation. Post-translationally, ubiquitinated by E3 ubiquitin-protein ligase HUWE1; leading to proteasomal degradation. Phosphorylated. Highly expressed in liver, kidney and heart. Very weakly expressed in brain and testis.

It is found in the nucleus. In terms of biological role, ligand-activated transcription factor. Key regulator of lipid metabolism. Activated by the endogenous ligand 1-palmitoyl-2-oleoyl-sn-glycerol-3-phosphocholine (16:0/18:1-GPC). Activated by oleylethanolamide, a naturally occurring lipid that regulates satiety. Receptor for peroxisome proliferators such as hypolipidemic drugs and fatty acids. Regulates the peroxisomal beta-oxidation pathway of fatty acids. Functions as a transcription activator for the ACOX1 and P450 genes. Transactivation activity requires heterodimerization with RXRA and is antagonized by NR2C2. May be required for the propagation of clock information to metabolic pathways regulated by PER2. This Mus musculus (Mouse) protein is Peroxisome proliferator-activated receptor alpha (Ppara).